A 386-amino-acid chain; its full sequence is Patatin-T5 (386 aa).

The N-terminal stretch at Met1–Ala23 is a signal peptide. Residues Leu32–Ile229 enclose the PNPLA domain. Residues Gly36 to Gly41 carry the GXGXXG motif. The N-linked (GlcNAc...) asparagine glycan is linked to Asn60. Positions Gly75–Gly79 match the GXSXG motif. The active-site Nucleophile is Ser77. N-linked (GlcNAc...) asparagine glycosylation is found at Asn90 and Asn202. Residue Asp215 is the Proton acceptor of the active site. The short motif at Asp215 to Ala217 is the DGA/G element.

The protein belongs to the patatin family. In terms of processing, N-glycosylated. Tuber and stolon.

It is found in the vacuole. Its function is as follows. Probable lipolytic acyl hydrolase (LAH), an activity which is thought to be involved in the response of tubers to pathogens. This Solanum tuberosum (Potato) protein is Patatin-T5.